The sequence spans 422 residues: Glutamyl-tRNA reductase (422 aa).

Residues 50-53 (TCNR), S110, 115-117 (ETQ), and Q121 each bind substrate. The Nucleophile role is filled by C51. 190 to 195 (GAGEMS) contributes to the NADP(+) binding site.

It belongs to the glutamyl-tRNA reductase family. In terms of assembly, homodimer.

It carries out the reaction (S)-4-amino-5-oxopentanoate + tRNA(Glu) + NADP(+) = L-glutamyl-tRNA(Glu) + NADPH + H(+). It functions in the pathway porphyrin-containing compound metabolism; protoporphyrin-IX biosynthesis; 5-aminolevulinate from L-glutamyl-tRNA(Glu): step 1/2. Its function is as follows. Catalyzes the NADPH-dependent reduction of glutamyl-tRNA(Glu) to glutamate 1-semialdehyde (GSA). In Campylobacter fetus subsp. fetus (strain 82-40), this protein is Glutamyl-tRNA reductase.